We begin with the raw amino-acid sequence, 250 residues long: Heat stress transcription factor C-1b (250 aa).

Residues 129 to 182 are a coiled coil; it reads EEGEEVRGTIEAVQRLREEQRGMEEELQAMDQRLRAAESRPGQMMAFLAKLADE. A hydrophobic repeat HR-A/B region spans residues 144-180; it reads LREEQRGMEEELQAMDQRLRAAESRPGQMMAFLAKLA. Residues 199–226 are disordered; it reads AAGNNGSDPCKRRRIGADTGRGGVATGG. The short motif at 209 to 212 is the Nuclear localization signal element; sequence KRRR.

This sequence belongs to the HSF family. Class C subfamily. Homotrimer. In terms of processing, exhibits temperature-dependent phosphorylation.

The protein localises to the nucleus. Functionally, transcriptional regulator that specifically binds DNA of heat shock promoter elements (HSE). The protein is Heat stress transcription factor C-1b (HSFC1B) of Oryza sativa subsp. japonica (Rice).